The following is a 385-amino-acid chain: Multidrug resistance protein MdtE (385 aa).

Residues 1–20 form the signal peptide; sequence MNRRRKLLIPLLFCGAMLTA. The N-palmitoyl cysteine moiety is linked to residue Cys-21. Residue Cys-21 is the site of S-diacylglycerol cysteine attachment.

It belongs to the membrane fusion protein (MFP) (TC 8.A.1) family. Homotrimer. Part of the tripartite efflux system MdtEF-TolC, which is composed of an inner membrane transporter, MdtF, a membrane fusion protein, MdtE, and an outer membrane component, TolC. The complex forms a large protein conduit and can translocate molecules across both the inner and outer membranes.

The protein resides in the cell inner membrane. Functionally, part of the tripartite efflux system MdtEF-TolC, which confers resistance to compounds such as rhodamine 6G, erythromycin, doxorubicin, ethidium bromide, TPP, SDS, deoxycholate, crystal violet and benzalkonium. The protein is Multidrug resistance protein MdtE (mdtE) of Escherichia coli (strain K12).